The sequence spans 396 residues: Schizokinen exporter SchE (396 aa).

Positions 1–25 (MLPKLILLATLYISQFIPTTFFIQA) are cleaved as a signal peptide. Residues 26-39 (LPVFMRQQKMSLDV) are Cytoplasmic-facing. Residues 40–60 (IGFLGLLILPSGLKFLWSPFI) traverse the membrane as a helical segment. Residues 61 to 73 (DRYRLGKLGHYRG) lie on the Periplasmic side of the membrane. The helical transmembrane segment at 74–94 (WIICFQLLLISTMLVTAFIDI) threads the bilayer. Residues 95–104 (QDNLNAFLTC) lie on the Cytoplasmic side of the membrane. The chain crosses the membrane as a helical span at residues 105-127 (MFLASLFSSSQDIATDALAVNLL). Residues 128–137 (EPQERGLGNA) are Periplasmic-facing. The chain crosses the membrane as a helical span at residues 138 to 158 (IQSGGNIFGAIIGGGVMLILL). At 159 to 162 (DKIG) the chain is on the cytoplasmic side. A helical membrane pass occupies residues 163-183 (WRYSLITLSIFMLINLVPILI). At 184-214 (YREKSQHQLENSTFFRSYFQPFISFLSRPKA) the chain is on the periplasmic side. The helical transmembrane segment at 215-235 (LPWLFVVLLYMMGDSVTSLMI) threads the bilayer. Residues 236 to 251 (RPLLVDRGLSLPDIGW) lie on the Cytoplasmic side of the membrane. A helical transmembrane segment spans residues 252–272 (ILGIVSYSARIVSALIAGLVI). Over 273-281 (VKLGRIKSL) the chain is Periplasmic. Residues 282–302 (IIFGFIADLTTLLYIIPAIGV) form a helical membrane-spanning segment. Residues 303–304 (SS) are Cytoplasmic-facing. The chain crosses the membrane as a helical span at residues 305-325 (LLVLYTVCIIVNATQSMAYTA). Topologically, residues 326-346 (LLSAMMDKCEKNTAATDYTMQ) are periplasmic. 2 helical membrane passes run 347 to 367 (VSVM…LATT) and 368 to 388 (MGYS…VFLI). Residues 389 to 396 (TQEYGVSS) lie on the Periplasmic side of the membrane.

It belongs to the major facilitator superfamily.

The protein resides in the cell inner membrane. Functionally, involved in the TolC-like protein HgdD-dependent secretion of schizokinen, a dihydroxamate-type siderophore. Transports schizokinen from the cytoplasm to the periplasm. The sequence is that of Schizokinen exporter SchE from Nostoc sp. (strain PCC 7120 / SAG 25.82 / UTEX 2576).